We begin with the raw amino-acid sequence, 322 residues long: uncharacterized protein (322 aa).

A compositionally biased stretch (polar residues) spans 1–13 (MTNADEQNMGQQE). Disordered regions lie at residues 1-94 (MTNA…EEYE) and 125-322 (RREM…TDEE). Residues 14–31 (GTDTATTAQDTNTQTVGT) are compositionally biased toward low complexity. The span at 32-50 (QSENTQNTQQASDAQTEQT) shows a compositional bias: polar residues. Residues 64–75 (EVDEDDVLDAQE) are compositionally biased toward acidic residues. Basic and acidic residues-rich tracts occupy residues 141 to 227 (GGDR…RGGD), 235 to 269 (RPRE…RGGD), 277 to 295 (RPRE…RTDD), and 308 to 322 (ARAD…TDEE).

This is an uncharacterized protein from Deinococcus radiodurans (strain ATCC 13939 / DSM 20539 / JCM 16871 / CCUG 27074 / LMG 4051 / NBRC 15346 / NCIMB 9279 / VKM B-1422 / R1).